The sequence spans 381 residues: 1-deoxy-D-xylulose 5-phosphate reductoisomerase (381 aa).

Positions 11, 12, 13, 14, 36, 37, and 121 each coordinate NADPH. Lysine 122 provides a ligand contact to 1-deoxy-D-xylulose 5-phosphate. Glutamate 123 is an NADPH binding site. Aspartate 147 provides a ligand contact to Mn(2+). Residues serine 148, glutamate 149, serine 173, and histidine 196 each coordinate 1-deoxy-D-xylulose 5-phosphate. Mn(2+) is bound at residue glutamate 149. Residue glycine 202 participates in NADPH binding. Residues serine 209, asparagine 214, lysine 215, and glutamate 218 each contribute to the 1-deoxy-D-xylulose 5-phosphate site. Glutamate 218 contacts Mn(2+).

Belongs to the DXR family. Mg(2+) is required as a cofactor. It depends on Mn(2+) as a cofactor.

The enzyme catalyses 2-C-methyl-D-erythritol 4-phosphate + NADP(+) = 1-deoxy-D-xylulose 5-phosphate + NADPH + H(+). It functions in the pathway isoprenoid biosynthesis; isopentenyl diphosphate biosynthesis via DXP pathway; isopentenyl diphosphate from 1-deoxy-D-xylulose 5-phosphate: step 1/6. In terms of biological role, catalyzes the NADPH-dependent rearrangement and reduction of 1-deoxy-D-xylulose-5-phosphate (DXP) to 2-C-methyl-D-erythritol 4-phosphate (MEP). The sequence is that of 1-deoxy-D-xylulose 5-phosphate reductoisomerase from Acetivibrio thermocellus (strain ATCC 27405 / DSM 1237 / JCM 9322 / NBRC 103400 / NCIMB 10682 / NRRL B-4536 / VPI 7372) (Clostridium thermocellum).